The chain runs to 358 residues: Na(+)/H(+) exchange regulatory cofactor NHE-RF1 (358 aa).

Residue Ser-2 is modified to N-acetylserine. A phosphoserine mark is found at Ser-2 and Ser-46. The region spanning 14–94 is the PDZ 1 domain; that stretch reads LCCLEKGPNG…AVRLLVVDPE (81 aa). Low complexity predominate over residues 114–134; it reads QETPGQAEPAAAAEAQGAGNE. Disordered regions lie at residues 114–192 and 269–358; these read QETP…EASG and SREA…FSNL. Residues 135–149 are compositionally biased toward basic and acidic residues; it reads NEPREADKSHPEQRK. Residues 154 to 234 form the PDZ 2 domain; it reads LCTMKKGPSG…ETKLLVVDRE (81 aa). A phosphoserine mark is found at Ser-162, Ser-269, Ser-280, Ser-290, and Ser-291. Polar residues predominate over residues 287-306; the sequence is RSASSDTSEELNSQDSPPKQ. Phosphothreonine is present on Thr-293. Residues Ser-294, Ser-299, and Ser-302 each carry the phosphoserine modification. The segment covering 307-319 has biased composition (low complexity); sequence DSTAPSSTSSSDP. Residues 348–358 show a composition bias toward basic and acidic residues; it reads WSKKNELFSNL.

As to quaternary structure, homodimer, and heterodimer with NHERF2. Binds the N-termini of EZR, RDX and MSN. Binds the C-termini of PDGFRA, PDGFRB, ADRB2, NOS2 and CFTR. Binds ARHGAP17, EPI64, RACK1, OPRK1, GNAQ, CTNNB1 and PLCB3. Binds PDZK1. Interacts with CLCN3. Binds the C-terminus of PAG1. In resting T-cells, part of a PAG1-NHERF1-MSN complex which is disrupted upon TCR activation. Forms a complex with CFTR and SLC4A7. Forms a complex with SLC4A7 and ATP6V1B1. Interacts with TRPC4 (via the PDZ-binding domain). Directly interacts with HTR4. Interacts (via the PDZ 1 domain) with PODXL (via the C-terminal PDZ-binding motif DTHL); interaction is not detected in glomerular epithelium cells. Interacts (via the PDZ 1 domain) with PODXL (via the C-terminal PDZ-binding motif DTHL); the interaction take place early in the secretory pathway and is necessary for its apical membrane sorting. Interacts with SLC26A3. Interacts with MCC. Interacts with SLC34A1. Interacts (via the PDZ domains) with SLC26A6 isoform 4 and isoform 5. Interacts (via PDZ domains) with ACE2 (via PDZ-binding motif); the interaction may enhance ACE2 membrane residence. Post-translationally, phosphorylated on serine residues.

Its subcellular location is the cytoplasm. It localises to the apical cell membrane. The protein resides in the endomembrane system. The protein localises to the cell projection. It is found in the filopodium. Its subcellular location is the ruffle. It localises to the microvillus. Its function is as follows. Scaffold protein that connects plasma membrane proteins with members of the ezrin/moesin/radixin family and thereby helps to link them to the actin cytoskeleton and to regulate their surface expression. Necessary for recycling of internalized ADRB2. Was first known to play a role in the regulation of the activity and subcellular location of SLC9A3. Necessary for cAMP-mediated phosphorylation and inhibition of SLC9A3. Involved in sperm capacitation. May participate in the regulation of the chloride and bicarbonate homeostasis in spermatozoa. May enhance Wnt signaling. May participate in HTR4 targeting to microvilli. Involved in the regulation of phosphate reabsorption in the renal proximal tubules. This is Na(+)/H(+) exchange regulatory cofactor NHE-RF1 (NHERF1) from Macaca fascicularis (Crab-eating macaque).